Here is a 513-residue protein sequence, read N- to C-terminus: ATP synthase subunit alpha 2 (513 aa).

ATP is bound at residue 169-176 (GDRQTGKT).

This sequence belongs to the ATPase alpha/beta chains family. F-type ATPases have 2 components, CF(1) - the catalytic core - and CF(0) - the membrane proton channel. CF(1) has five subunits: alpha(3), beta(3), gamma(1), delta(1), epsilon(1). CF(0) has three main subunits: a(1), b(2) and c(9-12). The alpha and beta chains form an alternating ring which encloses part of the gamma chain. CF(1) is attached to CF(0) by a central stalk formed by the gamma and epsilon chains, while a peripheral stalk is formed by the delta and b chains.

Its subcellular location is the cell inner membrane. The enzyme catalyses ATP + H2O + 4 H(+)(in) = ADP + phosphate + 5 H(+)(out). Its function is as follows. Produces ATP from ADP in the presence of a proton gradient across the membrane. The alpha chain is a regulatory subunit. This chain is ATP synthase subunit alpha 2, found in Photobacterium profundum (strain SS9).